Consider the following 266-residue polypeptide: Type III pantothenate kinase (266 aa).

Position 9 to 16 (9 to 16) interacts with ATP; the sequence is DAGNSRIK. Substrate is bound by residues tyrosine 96 and 103 to 106; that span reads GSDR. Aspartate 105 acts as the Proton acceptor in catalysis. An ATP-binding site is contributed by threonine 129. Threonine 189 is a binding site for substrate.

It belongs to the type III pantothenate kinase family. In terms of assembly, homodimer. It depends on NH4(+) as a cofactor. K(+) is required as a cofactor.

It localises to the cytoplasm. The catalysed reaction is (R)-pantothenate + ATP = (R)-4'-phosphopantothenate + ADP + H(+). It participates in cofactor biosynthesis; coenzyme A biosynthesis; CoA from (R)-pantothenate: step 1/5. Catalyzes the phosphorylation of pantothenate (Pan), the first step in CoA biosynthesis. This is Type III pantothenate kinase from Burkholderia cenocepacia (strain ATCC BAA-245 / DSM 16553 / LMG 16656 / NCTC 13227 / J2315 / CF5610) (Burkholderia cepacia (strain J2315)).